The sequence spans 366 residues: Ribosomal RNA large subunit methyltransferase M (366 aa).

Residues serine 188, 221–224 (CPGG), aspartate 240, aspartate 260, and aspartate 277 contribute to the S-adenosyl-L-methionine site. Lysine 306 (proton acceptor) is an active-site residue.

Belongs to the class I-like SAM-binding methyltransferase superfamily. RNA methyltransferase RlmE family. RlmM subfamily. As to quaternary structure, monomer.

It is found in the cytoplasm. It catalyses the reaction cytidine(2498) in 23S rRNA + S-adenosyl-L-methionine = 2'-O-methylcytidine(2498) in 23S rRNA + S-adenosyl-L-homocysteine + H(+). Functionally, catalyzes the 2'-O-methylation at nucleotide C2498 in 23S rRNA. The sequence is that of Ribosomal RNA large subunit methyltransferase M from Photorhabdus sp. (strain Az29).